The primary structure comprises 442 residues: Trigger factor (442 aa).

The region spanning 176–259 (GDFISLSLYV…VNAVIEISSP (84 aa)) is the PPIase FKBP-type domain.

The protein belongs to the FKBP-type PPIase family. Tig subfamily.

The protein resides in the cytoplasm. It carries out the reaction [protein]-peptidylproline (omega=180) = [protein]-peptidylproline (omega=0). In terms of biological role, involved in protein export. Acts as a chaperone by maintaining the newly synthesized protein in an open conformation. Functions as a peptidyl-prolyl cis-trans isomerase. This Chlamydia trachomatis serovar A (strain ATCC VR-571B / DSM 19440 / HAR-13) protein is Trigger factor.